A 406-amino-acid polypeptide reads, in one-letter code: 8-amino-7-oxononanoate synthase (406 aa).

Arg-20 is a substrate binding site. 116 to 117 (GY) lines the pyridoxal 5'-phosphate pocket. Substrate is bound at residue His-141. Residues Ser-187, His-215, and Thr-243 each contribute to the pyridoxal 5'-phosphate site. N6-(pyridoxal phosphate)lysine is present on Lys-246. A substrate-binding site is contributed by Thr-366.

This sequence belongs to the class-II pyridoxal-phosphate-dependent aminotransferase family. BioF subfamily. In terms of assembly, homodimer. The cofactor is pyridoxal 5'-phosphate.

The catalysed reaction is 6-carboxyhexanoyl-[ACP] + L-alanine + H(+) = (8S)-8-amino-7-oxononanoate + holo-[ACP] + CO2. The protein operates within cofactor biosynthesis; biotin biosynthesis. Catalyzes the decarboxylative condensation of pimeloyl-[acyl-carrier protein] and L-alanine to produce 8-amino-7-oxononanoate (AON), [acyl-carrier protein], and carbon dioxide. The sequence is that of 8-amino-7-oxononanoate synthase from Cupriavidus metallidurans (strain ATCC 43123 / DSM 2839 / NBRC 102507 / CH34) (Ralstonia metallidurans).